Reading from the N-terminus, the 1008-residue chain is G protein-regulated inducer of neurite outgrowth 1 (1008 aa).

Residues 1–859 (MDTAEDPAWL…SPPSRRDAGL (859 aa)) form a disordered region. Phosphothreonine is present on T60. S64 and S75 each carry phosphoserine. Positions 117-127 (ISGTPEATTSG) are enriched in polar residues. Composition is skewed to basic and acidic residues over residues 137–159 (TEPK…KSSK), 167–178 (GKEDPGSSRKAD), 230–269 (PRKE…HPVS), and 279–291 (EKVD…KRDP). A Phosphoserine modification is found at S237. 2 stretches are compositionally biased toward polar residues: residues 326–336 (SGKNGPVSSGT) and 391–406 (HTDT…TSLK). Residues S436 and S452 each carry the phosphoserine modification. Residues 454–466 (GKEDPVSSRREDP) are compositionally biased toward basic and acidic residues. Polar residues predominate over residues 481-491 (PESSGKTNPVS). Residues 549 to 559 (GKEDPVSKGKA) show a composition bias toward basic and acidic residues. At S615 the chain carries Phosphoserine. The span at 643–656 (PGQEGAAAPGEAGA) shows a compositional bias: low complexity. Over residues 659-679 (LKKETPQASEKVDPGSCRKAE) the composition is skewed to basic and acidic residues. S737 carries the phosphoserine modification. The segment covering 742-752 (RGSEGRVEPKA) has biased composition (basic and acidic residues). The segment covering 755–764 (VSSTEASSLG) has biased composition (polar residues). Position 799 is a phosphoserine (S799). Low complexity predominate over residues 838–847 (SAFSFQAAPR). T877 bears the Phosphothreonine mark. Phosphoserine occurs at positions 895 and 914. The segment at 899–1008 (AAVAPPEPAE…CCSRAGPTAE (110 aa)) is interaction with GNAO1. The interval 943 to 986 (ERQIEEHGRQGAPAPPPAARAGPGRSGSVRTAPPDGAAKRPPGL) is disordered. Phosphoserine is present on S993. Residues C999 and C1000 are each lipidated (S-palmitoyl cysteine).

In terms of assembly, interacts with activated forms of GNAI1, GNAO1 and GNAZ. Post-translationally, palmitoylation on Cys-999 and/or Cys-1000 is required for membrane targeting. As to expression, widely expressed in the central nervous system, with highest levels in spinal cord.

The protein resides in the cell membrane. It is found in the cell projection. Its subcellular location is the growth cone. Functionally, may be involved in neurite outgrowth. This Homo sapiens (Human) protein is G protein-regulated inducer of neurite outgrowth 1 (GPRIN1).